We begin with the raw amino-acid sequence, 104 residues long: Large ribosomal subunit protein uL24 (104 aa).

This sequence belongs to the universal ribosomal protein uL24 family. As to quaternary structure, part of the 50S ribosomal subunit.

One of two assembly initiator proteins, it binds directly to the 5'-end of the 23S rRNA, where it nucleates assembly of the 50S subunit. Functionally, one of the proteins that surrounds the polypeptide exit tunnel on the outside of the subunit. In Corynebacterium jeikeium (strain K411), this protein is Large ribosomal subunit protein uL24.